The following is a 184-amino-acid chain: Photosystem I assembly protein Ycf4 (184 aa).

Helical transmembrane passes span 21 to 43 and 58 to 80; these read NFCWAFILLFGALGFFFVGFSSY and LFIPQGIVMCFYGIAGLFISFYL.

This sequence belongs to the Ycf4 family.

The protein resides in the plastid. It localises to the chloroplast thylakoid membrane. In terms of biological role, seems to be required for the assembly of the photosystem I complex. The polypeptide is Photosystem I assembly protein Ycf4 (Marchantia polymorpha (Common liverwort)).